The chain runs to 1953 residues: TATA-binding protein-associated factor mot1 (1953 aa).

The HEAT 1 repeat unit spans residues 36 to 74 (PDELYNLLGRVVPYLKSKNWDTRVAAAKAIGGIVENVPV). Residues 79-141 (RTSPVKKEET…KLEEERLSTR (63 aa)) are disordered. Residues 98-108 (TEEKPFIKTEE) show a composition bias toward basic and acidic residues. The segment covering 113–130 (SSQSQVVVSSNLTSNSEV) has biased composition (low complexity). Basic and acidic residues predominate over residues 131–141 (SKLEEERLSTR). The residue at position 144 (serine 144) is a Phosphoserine. The tract at residues 240 to 278 (DNVGSNSKGSPTTSIPEHKTSINNNKPEDTPTPSENVHL) is disordered. Positions 242–276 (VGSNSKGSPTTSIPEHKTSINNNKPEDTPTPSENV) are enriched in polar residues. HEAT repeat units follow at residues 358-396 (VWPF…YAGF), 513-551 (SDYL…KLVQ), 554-592 (LSSC…LCSF), and 608-646 (EFSF…VQTS). Disordered stretches follow at residues 730 to 762 (SGQP…KDDP) and 1078 to 1103 (DDND…KSSL). HEAT repeat units lie at residues 1191–1229 (QSEI…SNAA) and 1270–1311 (VRIL…LVPL). The 174-residue stretch at 1370 to 1543 (AFLNKYELHG…WSLFDFLMPG (174 aa)) folds into the Helicase ATP-binding domain. 1383–1390 (DDMGLGKT) is a binding site for ATP. The DEGH box signature appears at 1494–1497 (DEGH). An HEAT 8 repeat occupies 1580-1623 (EAIHKQVLPFMLRRLKEDVLADLPPKIIQDYYCDMSDLQRKLLN). The Helicase C-terminal domain occupies 1725-1877 (GIDSALTNAV…STVVNQQNAG (153 aa)). The disordered stretch occupies residues 1901 to 1920 (QNIDKEESEDAAGRGLSGTS).

The protein belongs to the SNF2/RAD54 helicase family. In terms of assembly, forms a complex with TBP which binds TATA DNA.

Its subcellular location is the nucleus. Its function is as follows. Regulates transcription in association with TATA binding protein (TBP). Removes TBP from the TATA box via its ATPase activity. The chain is TATA-binding protein-associated factor mot1 from Schizosaccharomyces pombe (strain 972 / ATCC 24843) (Fission yeast).